The chain runs to 88 residues: Large ribosomal subunit protein uL23c (88 aa).

It belongs to the universal ribosomal protein uL23 family. Part of the 50S ribosomal subunit.

The protein resides in the plastid. The protein localises to the chloroplast. Binds to 23S rRNA. In Spirogyra maxima (Green alga), this protein is Large ribosomal subunit protein uL23c (rpl23).